The chain runs to 499 residues: Putative antiporter subunit mnhD2 (499 aa).

14 consecutive transmembrane segments (helical) span residues 3–23, 33–53, 79–99, 109–129, 131–151, 162–182, 210–230, 241–261, 272–292, 309–329, 331–351, 370–390, 404–424, and 452–472; these read LSNL…ILVF, YLYL…LIYV, LSLI…AYGF, YHLP…FLTS, LFNL…LITL, IIYV…IGLL, ISLI…FMWL, LAAL…IRFF, IHPL…IGVI, IGFI…GAIF, LVND…LVYI, FGVA…FSGF, GNYI…YSLF, and ILSI…VVLN.

The protein belongs to the CPA3 antiporters (TC 2.A.63) subunit D family. In terms of assembly, may form a heterooligomeric complex that consists of seven subunits: mnhA2, mnhB2, mnhC2, mnhD2, mnhE2, mnhF2 and mnhG2.

The protein localises to the cell membrane. In terms of biological role, expression of the mnh2 operon in E.coli is not able to catalyze Na(+)Li(+)/H(+) antiport. It does however confer higher growth rates than the control strain at up to pH 9.5. The operon may encode an NADH-ubiquinone oxidoreductase. The protein is Putative antiporter subunit mnhD2 (mnhD2) of Staphylococcus aureus.